Consider the following 320-residue polypeptide: Short-chain dehydrogenase TIC 32 A, chloroplastic (320 aa).

Residues 40-46 (GGTSGIG), 92-93 (DL), asparagine 119, and threonine 140 contribute to the NADP(+) site. Residue serine 174 participates in substrate binding. The Proton acceptor role is filled by tyrosine 196. Positions 301 to 317 (DTTLADKLWDFSIKLVE) are interaction with calmodulin.

This sequence belongs to the short-chain dehydrogenases/reductases (SDR) family. In terms of assembly, part of the Tic complex. Expressed in the dehiscence zone of developing pods.

It localises to the plastid. It is found in the chloroplast inner membrane. Its function is as follows. Involved in protein precursor import into chloroplasts. Maybe involved in pod abscission or dehiscence (pod shatter). This is Short-chain dehydrogenase TIC 32 A, chloroplastic from Brassica napus (Rape).